A 363-amino-acid chain; its full sequence is FMNH(2)-dependent dimethylsulfone monooxygenase (363 aa).

This sequence belongs to the SsuD family.

The enzyme catalyses dimethyl sulfone + FMNH2 + O2 = methanesulfinate + FMN + formaldehyde + H2O + 2 H(+). Involved in the dimethyl sulfide degradation pathway. Catalyzes the oxidation of dimethylsulfone (DMSO2) to yield methanesulfinate, which is oxidized spontaneously to methanesulfonate in the presence of dioxygen and FMNH(2). This Pseudomonas putida (Arthrobacter siderocapsulatus) protein is FMNH(2)-dependent dimethylsulfone monooxygenase.